A 147-amino-acid polypeptide reads, in one-letter code: uncharacterized protein (147 aa).

Residues 44–147 (LVGYIDKEIH…LKSIKERLSI (104 aa)) form the HTH LytTR-type domain.

It localises to the cytoplasm. This is an uncharacterized protein from Staphylococcus aureus (strain bovine RF122 / ET3-1).